A 466-amino-acid polypeptide reads, in one-letter code: Argininosuccinate lyase (466 aa).

The protein belongs to the lyase 1 family. Argininosuccinate lyase subfamily.

The protein localises to the cytoplasm. The enzyme catalyses 2-(N(omega)-L-arginino)succinate = fumarate + L-arginine. It participates in amino-acid biosynthesis; L-arginine biosynthesis; L-arginine from L-ornithine and carbamoyl phosphate: step 3/3. This Microcystis aeruginosa (strain NIES-843 / IAM M-2473) protein is Argininosuccinate lyase.